The primary structure comprises 119 residues: Histone H1B, sperm (119 aa).

The H15 domain maps to 8 to 77 (THPPVATAVV…QNKGSFRVNK (70 aa)). Residues 76–119 (NKTALPKKKKAAKKPKAKKVKKPKSAAKKKTNRARAPKTKKNRN) are disordered. Positions 80–119 (LPKKKKAAKKPKAKKVKKPKSAAKKKTNRARAPKTKKNRN) are enriched in basic residues.

Belongs to the histone H1/H5 family.

Its subcellular location is the nucleus. It localises to the chromosome. In terms of biological role, histones H1 are necessary for the condensation of nucleosome chains into higher-order structures. In Platynereis dumerilii (Dumeril's clam worm), this protein is Histone H1B, sperm.